Here is a 453-residue protein sequence, read N- to C-terminus: GTPase Der (453 aa).

2 consecutive EngA-type G domains span residues 4-169 and 177-352; these read PIVA…SETP and IKVA…RQFE. Residues 10–17, 57–61, 120–123, 183–190, 230–234, and 295–298 contribute to the GTP site; these read GRPNVGKS, DTGGL, NKCE, DTAGI, and NKWD. The 86-residue stretch at 353–438 folds into the KH-like domain; sequence QRVTTSVINE…PIRLLWRGKK (86 aa).

It belongs to the TRAFAC class TrmE-Era-EngA-EngB-Septin-like GTPase superfamily. EngA (Der) GTPase family. As to quaternary structure, associates with the 50S ribosomal subunit.

GTPase that plays an essential role in the late steps of ribosome biogenesis. This Acaryochloris marina (strain MBIC 11017) protein is GTPase Der.